Reading from the N-terminus, the 110-residue chain is Large ribosomal subunit protein uL22 (110 aa).

It belongs to the universal ribosomal protein uL22 family. Part of the 50S ribosomal subunit.

This protein binds specifically to 23S rRNA; its binding is stimulated by other ribosomal proteins, e.g. L4, L17, and L20. It is important during the early stages of 50S assembly. It makes multiple contacts with different domains of the 23S rRNA in the assembled 50S subunit and ribosome. Its function is as follows. The globular domain of the protein is located near the polypeptide exit tunnel on the outside of the subunit, while an extended beta-hairpin is found that lines the wall of the exit tunnel in the center of the 70S ribosome. This chain is Large ribosomal subunit protein uL22, found in Alkaliphilus oremlandii (strain OhILAs) (Clostridium oremlandii (strain OhILAs)).